The primary structure comprises 87 residues: Small ribosomal subunit protein eS21 (87 aa).

Belongs to the eukaryotic ribosomal protein eS21 family. As to quaternary structure, component of the small ribosomal subunit. Mature ribosomes consist of a small (40S) and a large (60S) subunit. The 40S subunit contains about 33 different proteins and 1 molecule of RNA (18S). The 60S subunit contains about 49 different proteins and 3 molecules of RNA (25S, 5.8S and 5S).

The protein localises to the cytoplasm. Functionally, required for the processing of the 20S rRNA-precursor to mature 18S rRNA in a late step of the maturation of 40S ribosomal subunits. Has a physiological role leading to 18S rRNA stability. This chain is Small ribosomal subunit protein eS21 (RPS21), found in Kluyveromyces lactis (strain ATCC 8585 / CBS 2359 / DSM 70799 / NBRC 1267 / NRRL Y-1140 / WM37) (Yeast).